Here is a 471-residue protein sequence, read N- to C-terminus: Thiohydroximate-O-sulfate sulfur/sulfate-lyase (nitrile-forming) NSP2 (471 aa).

The Jacalin-type lectin domain maps to 2–144; sequence VQKVEARGGE…LHSLGAYISS (143 aa). Kelch repeat units lie at residues 178 to 226, 231 to 277, 281 to 330, 332 to 379, 381 to 435, and 446 to 471; these read KIFS…VRMV, SLYV…SMTA, NVYV…VVQG, VWVV…VVGK, ILVF…GWSA, and GLVM…VDSA. Arg238 (proton donor) is an active-site residue. The a (Z)-N-(sulfonatooxy)alkanimidothioate site is built by Arg238, Ser271, Arg293, Gly322, and Val371. Residue Arg293 is the Proton donor of the active site. Glu387, Asp391, and His395 together coordinate Fe(2+). Trp433 lines the a (Z)-N-(sulfonatooxy)alkanimidothioate pocket.

This sequence belongs to the jacalin lectin family. Fe(2+) serves as cofactor. As to expression, expressed only in seeds.

The catalysed reaction is a (Z)-N-(sulfonatooxy)alkanimidothioate = a nitrile + sulfur + sulfate. The enzyme catalyses (Z)-phenyl-N-(sulfonatooxy)methanimidothioate = phenylacetonitrile + sulfur + sulfate. It catalyses the reaction (Z)-N-(sulfonatooxy)prop-2-enimidothioate = but-3-enenitrile + sulfur + sulfate. It carries out the reaction (Z)-(indol-3-yl)-N-(sulfonatooxy)methanimidothioate = (indol-3-yl)acetonitrile + sulfur + sulfate. The presence of Fe(2+) supports lyase activity in a dose-dependent manner with both benzylglucosinolate and 2-propenylglucosinolate as substrates. More active at pH 7.4 than at pH 6. Specifier protein responsible for constitutive and herbivore-induced simple nitrile formation, especially in seeds. Promotes simple nitriles, but not epithionitrile or thiocyanate formation. Converts allylglucosinolate (allyl-GSL), 2-propenylglucosinolate (sinigrin), indol-3-ylmethylglucosinolate (glucobrassicin), benzylisothiocyanate and benzylglucosinolate (glucotropaeolin) to their corresponding simple nitriles in the presence of myrosinase. Catalyzes mainly the conversion of benzylisothiocyanate when benzylglucosinolate is used as the initial substrate of myrosinase. Involved in the regulation of glucosinolate content in seeds, during stratification and germination. The polypeptide is Thiohydroximate-O-sulfate sulfur/sulfate-lyase (nitrile-forming) NSP2 (Arabidopsis thaliana (Mouse-ear cress)).